Here is a 364-residue protein sequence, read N- to C-terminus: Metalloendoproteinase 1-MMP (364 aa).

The signal sequence occupies residues 1 to 28; it reads MSRNLIYRRNRALCFVLILFCFPYRFGA. Positions 29–149 are cleaved as a propeptide — activation peptide; sequence RNTPEAEQST…NNDFLHTTAH (121 aa). N-linked (GlcNAc...) asparagine glycosylation is present at asparagine 49. The Cysteine switch motif lies at 128–135; it reads PRCGVSDT. Cysteine 130 serves as a coordination point for Zn(2+). Aspartate 211 contacts Ca(2+). Residues histidine 221 and aspartate 223 each coordinate Zn(2+). The Ca(2+) site is built by aspartate 228 and glycine 229. A Zn(2+)-binding site is contributed by histidine 236. Residue glycine 243 coordinates Ca(2+). Histidine 246 contacts Zn(2+). Residues aspartate 248 and glutamate 251 each coordinate Ca(2+). Histidine 275 is a Zn(2+) binding site. The active site involves glutamate 276. Zn(2+) is bound by residues histidine 279 and histidine 285. N-linked (GlcNAc...) asparagine glycosylation is present at asparagine 338. A lipid anchor (GPI-anchor amidated glycine) is attached at glycine 339. The propeptide at 340-364 is removed in mature form; that stretch reads TVSHRFLSGNFIGYVLLVVGLILFL.

This sequence belongs to the peptidase M10A family. Matrix metalloproteinases (MMPs) subfamily. The cofactor is Ca(2+). Requires Zn(2+) as cofactor. In terms of tissue distribution, mostly expressed in flowers, roots and stems, and, to a lower extent, in leaves.

It is found in the cell membrane. Its activity is regulated as follows. Inhibited by human TIMP-1 and TIMP-2 and by the peptide hydroxamate inhibitor (BB-94). Repressed by acetohydroxamic acid (AHA). In terms of biological role, matrix metalloproteinases (MMPs) or matrixins may play a role in the degradation and remodeling of the extracellular matrix (ECM) during development or in response to stresses. Can cleave myelin basic protein as well as fluorigenic peptide substrates, McaPLANvaDpaAR-NH(2) and McaPChaGNvaHADpa-NH(2) 4-fold more efficiently than McaPLGLDpaAR-NH(2) (QF24). Active on myelin basic protein (MBP) and, to some extent, on McaPLGLDpaAR-NH(2) (QF24) and beta-casein. This chain is Metalloendoproteinase 1-MMP, found in Arabidopsis thaliana (Mouse-ear cress).